We begin with the raw amino-acid sequence, 323 residues long: Acetyl-coenzyme A carboxylase carboxyl transferase subunit alpha (323 aa).

Residues 39–293 form the CoA carboxyltransferase C-terminal domain; that stretch reads RLSKKSQQLT…RRALADSLRQ (255 aa).

This sequence belongs to the AccA family. Acetyl-CoA carboxylase is a heterohexamer composed of biotin carboxyl carrier protein (AccB), biotin carboxylase (AccC) and two subunits each of ACCase subunit alpha (AccA) and ACCase subunit beta (AccD).

The protein resides in the cytoplasm. It catalyses the reaction N(6)-carboxybiotinyl-L-lysyl-[protein] + acetyl-CoA = N(6)-biotinyl-L-lysyl-[protein] + malonyl-CoA. It participates in lipid metabolism; malonyl-CoA biosynthesis; malonyl-CoA from acetyl-CoA: step 1/1. Component of the acetyl coenzyme A carboxylase (ACC) complex. First, biotin carboxylase catalyzes the carboxylation of biotin on its carrier protein (BCCP) and then the CO(2) group is transferred by the carboxyltransferase to acetyl-CoA to form malonyl-CoA. In Burkholderia multivorans (strain ATCC 17616 / 249), this protein is Acetyl-coenzyme A carboxylase carboxyl transferase subunit alpha.